Consider the following 227-residue polypeptide: Inner membrane lipoprotein SadB (227 aa).

Residues Met1–Gly21 form the signal peptide. Cys22 is lipidated: N-palmitoyl cysteine. Cys22 carries the S-diacylglycerol cysteine lipid modification. A coiled-coil region spans residues Val31–Thr68.

Homotrimer.

The protein resides in the cell inner membrane. Its function is as follows. Required for proper surface expression of the autotransporter adhesin SadA. Could be directly involved in the biogenesis of functionally active SadA. The chain is Inner membrane lipoprotein SadB from Salmonella typhimurium (strain LT2 / SGSC1412 / ATCC 700720).